Here is a 441-residue protein sequence, read N- to C-terminus: Glutamyl-tRNA reductase (441 aa).

Residues 58–61 (TCNR), S116, 121–123 (EPD), and Q127 each bind substrate. Catalysis depends on C59, which acts as the Nucleophile. Residue 195–200 (GAGMAG) participates in NADP(+) binding.

The protein belongs to the glutamyl-tRNA reductase family. In terms of assembly, homodimer.

The enzyme catalyses (S)-4-amino-5-oxopentanoate + tRNA(Glu) + NADP(+) = L-glutamyl-tRNA(Glu) + NADPH + H(+). It functions in the pathway porphyrin-containing compound metabolism; protoporphyrin-IX biosynthesis; 5-aminolevulinate from L-glutamyl-tRNA(Glu): step 1/2. Catalyzes the NADPH-dependent reduction of glutamyl-tRNA(Glu) to glutamate 1-semialdehyde (GSA). This Ignicoccus hospitalis (strain KIN4/I / DSM 18386 / JCM 14125) protein is Glutamyl-tRNA reductase.